The chain runs to 790 residues: Disintegrin and metalloproteinase domain-containing protein 30 (790 aa).

Positions 1-27 are cleaved as a signal peptide; the sequence is MRSVQIFLSQCRLLLLLVPTMLLKSLG. Positions 28-198 are excised as a propeptide; sequence EDVIFHPEGE…KARLRDFPGS (171 aa). Residues 170–177 carry the Cysteine switch motif; the sequence is QVCGLSDD. Cys-172 lines the Zn(2+) pocket. Topologically, residues 199–687 are extracellular; it reads YKHPKYLELI…LRGAIPSSIW (489 aa). Positions 203–393 constitute a Peptidase M12B domain; sequence KYLELILLFD…SGATCLNNIP (191 aa). An N-linked (GlcNAc...) asparagine glycan is attached at Asn-222. Intrachain disulfides connect Cys-313–Cys-388, Cys-353–Cys-373, and Cys-355–Cys-361. His-338 is a binding site for Zn(2+). Glu-339 is a catalytic residue. His-342 and His-348 together coordinate Zn(2+). Residues Asn-372, Asn-438, Asn-473, and Asn-625 are each glycosylated (N-linked (GlcNAc...) asparagine). One can recognise a Disintegrin domain in the interval 399-485; sequence LKRCGNKIVE…SCPNDVYKQD (87 aa). Cys-457 and Cys-477 are oxidised to a cystine. Residues 629–663 enclose the EGF-like domain; that stretch reads LQFDCLPEKCNTRGVCNNRKNCHCMYGWAPPFCEE. 3 disulfides stabilise this stretch: Cys-633–Cys-644, Cys-638–Cys-650, and Cys-652–Cys-661. A helical transmembrane segment spans residues 688–708; sequence VVSIIMFRLILLILSVVFVFF. Residues 709 to 790 lie on the Cytoplasmic side of the membrane; sequence RQVIGNHLKP…KAKSVKKQKK (82 aa). The span at 720 to 779 shows a compositional bias: basic and acidic residues; sequence QEKMPLSKAKTEQEESKTKTVQEESKTKTGQEESEAKTGQEESKAKTGQEESKANIESKR. A disordered region spans residues 720–790; the sequence is QEKMPLSKAK…KAKSVKKQKK (71 aa). 5 consecutive repeat copies span residues 732-740, 741-749, 750-758, 759-767, and 768-776. The interval 732–776 is 5 X 9 AA approximate repeats; it reads QEESKTKTVQEESKTKTGQEESEAKTGQEESKAKTGQEESKANIE. The segment covering 780–790 has biased composition (basic residues); sequence PKAKSVKKQKK.

In terms of assembly, interacts with CTSD; this leads to activation of CTSD. Requires Zn(2+) as cofactor. In terms of tissue distribution, expressed in brain neurons (at protein level). Expressed in testis.

Its subcellular location is the late endosome membrane. Its function is as follows. Plays a role in lysosomal amyloid precursor protein (APP) processing by cleaving and activating CTSD/cathepsin D which leads to APP degradation. This Homo sapiens (Human) protein is Disintegrin and metalloproteinase domain-containing protein 30 (ADAM30).